The primary structure comprises 207 residues: Uracil phosphoribosyltransferase (207 aa).

Residues R77, R102, and 129-137 (DPMLATGGS) each bind 5-phospho-alpha-D-ribose 1-diphosphate. Uracil-binding positions include I192 and 197-199 (GDA). D198 serves as a coordination point for 5-phospho-alpha-D-ribose 1-diphosphate.

This sequence belongs to the UPRTase family. Mg(2+) serves as cofactor.

It catalyses the reaction UMP + diphosphate = 5-phospho-alpha-D-ribose 1-diphosphate + uracil. It participates in pyrimidine metabolism; UMP biosynthesis via salvage pathway; UMP from uracil: step 1/1. With respect to regulation, allosterically activated by GTP. Catalyzes the conversion of uracil and 5-phospho-alpha-D-ribose 1-diphosphate (PRPP) to UMP and diphosphate. This is Uracil phosphoribosyltransferase from Nocardia farcinica (strain IFM 10152).